We begin with the raw amino-acid sequence, 226 residues long: ATP synthase F(0) complex subunit a (226 aa).

The next 6 helical transmembrane spans lie at 6–26, 68–88, 97–117, 138–158, 164–184, and 193–213; these read FATF…IMLF, WALM…LGLL, QLSM…LMGF, VPML…ALAV, ITAG…LCSI, and FIIL…QAYV.

This sequence belongs to the ATPase A chain family. As to quaternary structure, component of the ATP synthase complex composed at least of ATP5F1A/subunit alpha, ATP5F1B/subunit beta, ATP5MC1/subunit c (homooctomer), MT-ATP6/subunit a, MT-ATP8/subunit 8, ATP5ME/subunit e, ATP5MF/subunit f, ATP5MG/subunit g, ATP5MK/subunit k, ATP5MJ/subunit j, ATP5F1C/subunit gamma, ATP5F1D/subunit delta, ATP5F1E/subunit epsilon, ATP5PF/subunit F6, ATP5PB/subunit b, ATP5PD/subunit d, ATP5PO/subunit OSCP. ATP synthase complex consists of a soluble F(1) head domain (subunits alpha(3) and beta(3)) - the catalytic core - and a membrane F(0) domain - the membrane proton channel (subunits c, a, 8, e, f, g, k and j). These two domains are linked by a central stalk (subunits gamma, delta, and epsilon) rotating inside the F1 region and a stationary peripheral stalk (subunits F6, b, d, and OSCP). Interacts with DNAJC30; interaction is direct.

It localises to the mitochondrion inner membrane. The catalysed reaction is H(+)(in) = H(+)(out). Functionally, subunit a, of the mitochondrial membrane ATP synthase complex (F(1)F(0) ATP synthase or Complex V) that produces ATP from ADP in the presence of a proton gradient across the membrane which is generated by electron transport complexes of the respiratory chain. ATP synthase complex consist of a soluble F(1) head domain - the catalytic core - and a membrane F(1) domain - the membrane proton channel. These two domains are linked by a central stalk rotating inside the F(1) region and a stationary peripheral stalk. During catalysis, ATP synthesis in the catalytic domain of F(1) is coupled via a rotary mechanism of the central stalk subunits to proton translocation. With the subunit c (ATP5MC1), forms the proton-conducting channel in the F(0) domain, that contains two crucial half-channels (inlet and outlet) that facilitate proton movement from the mitochondrial intermembrane space (IMS) into the matrix. Protons are taken up via the inlet half-channel and released through the outlet half-channel, following a Grotthuss mechanism. The sequence is that of ATP synthase F(0) complex subunit a from Osphranter robustus (Wallaroo).